A 598-amino-acid polypeptide reads, in one-letter code: Torsin-1A-interacting protein 1 (598 aa).

Over 1 to 351 the chain is Nuclear; that stretch reads MAGEGRRAEA…PQNASFVKRN (351 aa). Disordered stretches follow at residues 19 to 254 and 267 to 314; these read VTPR…RSSS and QNFT…IYGS. A Phosphoserine modification is found at serine 60. 2 stretches are compositionally biased toward basic and acidic residues: residues 73–101 and 115–124; these read LVDK…EVRE and RPQEAEEMKT. A phosphoserine mark is found at serine 135, serine 143, serine 154, serine 156, serine 157, and serine 187. A compositionally biased stretch (polar residues) spans 205–214; that stretch reads EATSVQQKVN. Serine 216 bears the Phosphoserine mark. Phosphothreonine is present on threonine 221. A phosphoserine mark is found at serine 227, serine 230, and serine 242. Residues 238–250 are compositionally biased toward basic and acidic residues; it reads RSRDSDESGDKTT. Composition is skewed to polar residues over residues 277 to 287 and 300 to 313; these read SVLSSGYQKTP and RMQT…SIYG. Serine 320 is subject to Phosphoserine. Positions 322-341 are disordered; the sequence is LKSELGNQSPSTSSQQVTGQ. Residue lysine 323 forms a Glycyl lysine isopeptide (Lys-Gly) (interchain with G-Cter in SUMO2) linkage. The span at 326–341 shows a compositional bias: polar residues; the sequence is LGNQSPSTSSQQVTGQ. Phosphoserine is present on serine 330. A helical membrane pass occupies residues 352–372; that stretch reads WWWLLPLIAALASGSFWFFST. The interaction with TOR1A stretch occupies residues 371–598; sequence STPEVETTAV…ENALKRGICL (228 aa). Topologically, residues 373–598 are perinuclear space; sequence PEVETTAVQE…ENALKRGICL (226 aa). Positions 374 to 450 form a coiled coil; sequence EVETTAVQEF…SEQIADAYSS (77 aa). The N-linked (GlcNAc...) asparagine glycan is linked to asparagine 414.

The protein belongs to the TOR1AIP family. In terms of assembly, interacts with ATP1B4. Interacts with TOR1A (ATP-bound). Interacts with TOR1B, TOR2A and TOR3A.

It localises to the nucleus inner membrane. Required for nuclear membrane integrity. Induces TOR1A and TOR1B ATPase activity and is required for their location on the nuclear membrane. Binds to A- and B-type lamins. Possible role in membrane attachment and assembly of the nuclear lamina. This is Torsin-1A-interacting protein 1 (TOR1AIP1) from Pongo abelii (Sumatran orangutan).